We begin with the raw amino-acid sequence, 237 residues long: Ribosomal RNA large subunit methyltransferase E (237 aa).

Residues Gly-76, Trp-78, Asp-99, Asp-115, and Asp-139 each coordinate S-adenosyl-L-methionine. Lys-179 (proton acceptor) is an active-site residue.

This sequence belongs to the class I-like SAM-binding methyltransferase superfamily. RNA methyltransferase RlmE family.

It localises to the cytoplasm. The catalysed reaction is uridine(2552) in 23S rRNA + S-adenosyl-L-methionine = 2'-O-methyluridine(2552) in 23S rRNA + S-adenosyl-L-homocysteine + H(+). Specifically methylates the uridine in position 2552 of 23S rRNA at the 2'-O position of the ribose in the fully assembled 50S ribosomal subunit. The polypeptide is Ribosomal RNA large subunit methyltransferase E (Rhodopseudomonas palustris (strain ATCC BAA-98 / CGA009)).